We begin with the raw amino-acid sequence, 350 residues long: Purine-binding protein BAB2_0673 (350 aa).

Positions 1–17 (MVIATVAGFMLGGAAHA) are cleaved as a signal peptide. Residues Trp36, Trp185, and Asp211 each coordinate adenine.

This sequence belongs to the BMP lipoprotein family.

Functionally, binds adenine and probably also other purines, such as guanine. May play a role in adenine and guanine uptake. May be part of an ABC-type uptake system for adenine and similar ligands. In Brucella abortus (strain 2308), this protein is Purine-binding protein BAB2_0673.